The primary structure comprises 153 residues: Fimbrial protein EcpC (153 aa).

The propeptide at 1–8 (MLKQVQKG) is leader sequence. F9 is subject to N-methylphenylalanine. Residues 9 to 29 (FTLIELMIVIAIIGILAAIAL) traverse the membrane as a helical segment. Residues C130 and C143 are joined by a disulfide bond.

Belongs to the N-Me-Phe pilin family.

Its subcellular location is the fimbrium. The protein resides in the membrane. In Eikenella corrodens, this protein is Fimbrial protein EcpC (ecpC).